The sequence spans 548 residues: Peptide chain release factor 3 (548 aa).

Residues 23-290 (ERRRTFGIIS…ALLDWAPPPQ (268 aa)) form the tr-type G domain. GTP-binding positions include 32-39 (SHPDAGKT), 100-104 (DTPGH), and 154-157 (NKMD).

The protein belongs to the TRAFAC class translation factor GTPase superfamily. Classic translation factor GTPase family. PrfC subfamily.

The protein localises to the cytoplasm. Functionally, increases the formation of ribosomal termination complexes and stimulates activities of RF-1 and RF-2. It binds guanine nucleotides and has strong preference for UGA stop codons. It may interact directly with the ribosome. The stimulation of RF-1 and RF-2 is significantly reduced by GTP and GDP, but not by GMP. In Aromatoleum aromaticum (strain DSM 19018 / LMG 30748 / EbN1) (Azoarcus sp. (strain EbN1)), this protein is Peptide chain release factor 3.